A 257-amino-acid polypeptide reads, in one-letter code: Imidazole glycerol phosphate synthase subunit HisF (257 aa).

Active-site residues include Asp11 and Asp130.

It belongs to the HisA/HisF family. As to quaternary structure, heterodimer of HisH and HisF.

Its subcellular location is the cytoplasm. The enzyme catalyses 5-[(5-phospho-1-deoxy-D-ribulos-1-ylimino)methylamino]-1-(5-phospho-beta-D-ribosyl)imidazole-4-carboxamide + L-glutamine = D-erythro-1-(imidazol-4-yl)glycerol 3-phosphate + 5-amino-1-(5-phospho-beta-D-ribosyl)imidazole-4-carboxamide + L-glutamate + H(+). The protein operates within amino-acid biosynthesis; L-histidine biosynthesis; L-histidine from 5-phospho-alpha-D-ribose 1-diphosphate: step 5/9. Functionally, IGPS catalyzes the conversion of PRFAR and glutamine to IGP, AICAR and glutamate. The HisF subunit catalyzes the cyclization activity that produces IGP and AICAR from PRFAR using the ammonia provided by the HisH subunit. The polypeptide is Imidazole glycerol phosphate synthase subunit HisF (Vibrio cholerae serotype O1 (strain ATCC 39541 / Classical Ogawa 395 / O395)).